The following is a 322-amino-acid chain: Deoxyhypusine hydroxylase (322 aa).

4 HEAT-like PBS-type repeats span residues 76-102 (LKHE…VMLD), 109-135 (VRHE…SRRE), 234-260 (FKHE…VLKR), and 267-293 (VRHE…HLQD). H78, E79, H111, E112, H236, E237, H269, and E270 together coordinate Fe cation.

Belongs to the deoxyhypusine hydroxylase family. Requires Fe(2+) as cofactor.

The protein localises to the cytoplasm. Its subcellular location is the nucleus. It carries out the reaction [eIF5A protein]-deoxyhypusine + AH2 + O2 = [eIF5A protein]-hypusine + A + H2O. Its pathway is protein modification; eIF5A hypusination. Its function is as follows. Catalyzes the hydroxylation of the N(6)-(4-aminobutyl)-L-lysine intermediate to form hypusine, an essential post-translational modification only found in mature eIF-5A factor. The sequence is that of Deoxyhypusine hydroxylase from Eremothecium gossypii (strain ATCC 10895 / CBS 109.51 / FGSC 9923 / NRRL Y-1056) (Yeast).